A 412-amino-acid polypeptide reads, in one-letter code: Tryptophan 2,3-dioxygenase (412 aa).

Substrate-binding positions include 79 to 83, Y146, and R150; that span reads FIVVH. A heme-binding site is contributed by H346. T360 lines the substrate pocket.

This sequence belongs to the tryptophan 2,3-dioxygenase family. As to quaternary structure, homotetramer. Requires heme as cofactor.

The catalysed reaction is L-tryptophan + O2 = N-formyl-L-kynurenine. It participates in amino-acid degradation; L-tryptophan degradation via kynurenine pathway; L-kynurenine from L-tryptophan: step 1/2. In terms of biological role, heme-dependent dioxygenase that catalyzes the oxidative cleavage of the L-tryptophan (L-Trp) pyrrole ring and converts L-tryptophan to N-formyl-L-kynurenine. Catalyzes the oxidative cleavage of the indole moiety. This is Tryptophan 2,3-dioxygenase from Sorangium cellulosum (strain So ce56) (Polyangium cellulosum (strain So ce56)).